A 400-amino-acid chain; its full sequence is Protein phosphatase methylesterase 1 (400 aa).

Residues 32 to 70 form a disordered region; sequence DENDGDALGSLPSFNGQSNRNRKYTGKTGSTTDRISSKE. In terms of domain architecture, AB hydrolase-1 spans 114-365; the sequence is PIFIFHHGAG…DSGHFIQEDS (252 aa). Active-site residues include S205, D233, and H359.

The protein belongs to the AB hydrolase superfamily. Interacts with and inactivates the phosphatase PP2A-like catalytic subunits PPG1, PPH21, PPH22, PPH3 and SIT4.

The catalysed reaction is [phosphatase 2A protein]-C-terminal L-leucine methyl ester + H2O = [phosphatase 2A protein]-C-terminal L-leucine + methanol + H(+). Demethylates proteins that have been reversibly carboxymethylated. Demethylates the phosphatase PP2A catalytic subunits PPH21 and PPH22. Forms inactive complexes (PP2Ai) with phosphatase PP2A-like catalytic subunits. Involved in the regulation of cell cycle progression at START. This chain is Protein phosphatase methylesterase 1 (PPE1), found in Saccharomyces cerevisiae (strain ATCC 204508 / S288c) (Baker's yeast).